A 919-amino-acid chain; its full sequence is Valine--tRNA ligase (919 aa).

The short motif at 46–56 (PNVTGTLHMGH) is the 'HIGH' region element. The 'KMSKS' region signature appears at 528 to 532 (KMSKS). Residue Lys-531 coordinates ATP. A coiled-coil region spans residues 849–919 (LAGLVDIEAE…KTLEKKEALG (71 aa)).

This sequence belongs to the class-I aminoacyl-tRNA synthetase family. ValS type 1 subfamily. As to quaternary structure, monomer.

It is found in the cytoplasm. It catalyses the reaction tRNA(Val) + L-valine + ATP = L-valyl-tRNA(Val) + AMP + diphosphate. Functionally, catalyzes the attachment of valine to tRNA(Val). As ValRS can inadvertently accommodate and process structurally similar amino acids such as threonine, to avoid such errors, it has a 'posttransfer' editing activity that hydrolyzes mischarged Thr-tRNA(Val) in a tRNA-dependent manner. The polypeptide is Valine--tRNA ligase (Francisella tularensis subsp. tularensis (strain SCHU S4 / Schu 4)).